The primary structure comprises 685 residues: Iron(3+)-hydroxamate import system permease protein FhuB (685 aa).

18 helical membrane passes run Ala35–Val55, Leu87–Val107, Val120–Leu140, Gln143–Gly163, Ile172–Phe192, Gln222–Leu242, Ala265–Phe285, Leu302–Trp322, Met328–Leu348, Leu373–Phe393, Trp416–Ile436, Ala456–Leu476, Gly479–Phe499, Met504–Ala524, Ala553–Leu573, Ile592–Leu612, Met632–Cys652, and Tyr660–Leu680.

This sequence belongs to the binding-protein-dependent transport system permease family. FecCD subfamily. The complex is composed of two ATP-binding proteins (FhuC), a transmembrane protein (FhuB) and a solute-binding protein (FhuD).

It is found in the cell inner membrane. Functionally, part of the ABC transporter complex FhuCDB involved in iron(3+)-hydroxamate import. Responsible for the translocation of the substrate across the membrane. Involved in ferrioxamine-mediated iron(III) utilization. The sequence is that of Iron(3+)-hydroxamate import system permease protein FhuB (fhuB) from Salmonella typhimurium (strain LT2 / SGSC1412 / ATCC 700720).